Here is a 190-residue protein sequence, read N- to C-terminus: Threonylcarbamoyl-AMP synthase (190 aa).

Residues 7-190 (GDAIAAAIDV…ALTGELFRQG (184 aa)) enclose the YrdC-like domain.

Belongs to the SUA5 family. TsaC subfamily.

It is found in the cytoplasm. The enzyme catalyses L-threonine + hydrogencarbonate + ATP = L-threonylcarbamoyladenylate + diphosphate + H2O. In terms of biological role, required for the formation of a threonylcarbamoyl group on adenosine at position 37 (t(6)A37) in tRNAs that read codons beginning with adenine. Catalyzes the conversion of L-threonine, HCO(3)(-)/CO(2) and ATP to give threonylcarbamoyl-AMP (TC-AMP) as the acyladenylate intermediate, with the release of diphosphate. This is Threonylcarbamoyl-AMP synthase from Escherichia coli O157:H7.